Consider the following 447-residue polypeptide: Putative branched-chain amino acid carrier protein SE_1090 (447 aa).

The next 12 membrane-spanning stretches (helical) occupy residues 5-25, 40-60, 74-94, 114-134, 143-163, 193-213, 229-249, 290-310, 317-337, 350-370, 382-402, and 417-437; these read TWIIGFTLFAMFFGAGNLIFP, ILAFALTGIGLPLLGVVVGAL, PRFSLIFLIIIYLTIGPLFAI, GNLALFIFTVIYFLIVLYLCL, IGSLLTPLLLITIVAMIIKGF, GYLTMDAIASIAFSMIVVNAI, IIAGLIAAIALVFIYISLGYI, LLGIIVSLACLTTACGLIVSV, ILPKIPYKVFVIFFILVSFIL, VPVLSVIYPVAITVILLILIA, IPLIIVAIESILSLITTQGWI, and LEWFPIAVVATLVGYMISYFV.

This sequence belongs to the branched chain amino acid transporter family.

The protein localises to the cell membrane. Functionally, component of the transport system for branched-chain amino acids (leucine, isoleucine and valine), which is coupled to a proton motive force. The protein is Putative branched-chain amino acid carrier protein SE_1090 of Staphylococcus epidermidis (strain ATCC 12228 / FDA PCI 1200).